The primary structure comprises 364 residues: MAGYNLEAIEAAPLKDDLDIVIPTIRSLDFLEQWRPFLHHYHLIIVQDGDPSIKIRVPEGYDYELYNRNDINRILGPRANCISYKDGGCRCFGFMVSKKKYIYTIDDDCFVAKDPSGKDINVIAQHIKNLETPSTPHYFNTLYDPFRDGTDFVRGYPFSLREGVQTAISHGLWLNIPDYDAPTQLVKPRERNTRYVDAVMTIPKRVLYPMCGMNLAFNRELVGPAMYFGLMGEGQPISRYDDMWAGWAAKVVCDHLGFGVKTGLPYLWHSKASNPFVNLKKEHKGLHWQEDMVPFFQNLRLSKESDTAAKCYMEISNMTKEKLTKVDPYFEKLADAMVVWIEAWEELNPPVKKKQSDGKDVKAK.

Positions 106–108 (DDD) match the DXD motif motif. N-linked (Glc...) arginine glycosylation occurs at R154.

It belongs to the RGP family. Heteromers with RGP1 and RGP2. Requires Mn(2+) as cofactor. The cofactor is Mg(2+). In terms of processing, reversibly glycosylated in vitro by UDP-glucose, UDP-xylose and UDP-galactose, but not UDP-mannose. As to expression, specifically expressed in developing seeds.

It localises to the cytoplasm. It is found in the cytosol. The protein localises to the golgi apparatus. The enzyme catalyses UDP-beta-L-arabinofuranose = UDP-beta-L-arabinopyranose. In terms of biological role, probable UDP-L-arabinose mutase involved in the biosynthesis of cell wall non-cellulosic polysaccharides. This is Probable UDP-arabinopyranose mutase 4 from Arabidopsis thaliana (Mouse-ear cress).